Consider the following 288-residue polypeptide: DegV domain-containing protein MYPU_3590 (288 aa).

A DegV domain is found at 3–275 (IAIVIDSSSG…LGAIAISLVK (273 aa)). The hexadecanoate site is built by S61 and S92.

In terms of biological role, may bind long-chain fatty acids, such as palmitate, and may play a role in lipid transport or fatty acid metabolism. The sequence is that of DegV domain-containing protein MYPU_3590 from Mycoplasmopsis pulmonis (strain UAB CTIP) (Mycoplasma pulmonis).